The sequence spans 217 residues: Pyridoxine/pyridoxamine 5'-phosphate oxidase (217 aa).

Residues 13–16 (RREY) and lysine 71 contribute to the substrate site. Residues 66 to 71 (RTVLLK), 81 to 82 (YT), arginine 87, lysine 88, and glutamine 110 each bind FMN. Residues tyrosine 128, arginine 132, and serine 136 each coordinate substrate. Residues 145-146 (QS) and tryptophan 190 each bind FMN. 196–198 (RLH) provides a ligand contact to substrate. Arginine 200 lines the FMN pocket.

Belongs to the pyridoxamine 5'-phosphate oxidase family. As to quaternary structure, homodimer. It depends on FMN as a cofactor.

The enzyme catalyses pyridoxamine 5'-phosphate + O2 + H2O = pyridoxal 5'-phosphate + H2O2 + NH4(+). It carries out the reaction pyridoxine 5'-phosphate + O2 = pyridoxal 5'-phosphate + H2O2. It participates in cofactor metabolism; pyridoxal 5'-phosphate salvage; pyridoxal 5'-phosphate from pyridoxamine 5'-phosphate: step 1/1. The protein operates within cofactor metabolism; pyridoxal 5'-phosphate salvage; pyridoxal 5'-phosphate from pyridoxine 5'-phosphate: step 1/1. Its function is as follows. Catalyzes the oxidation of either pyridoxine 5'-phosphate (PNP) or pyridoxamine 5'-phosphate (PMP) into pyridoxal 5'-phosphate (PLP). In Rubrobacter xylanophilus (strain DSM 9941 / JCM 11954 / NBRC 16129 / PRD-1), this protein is Pyridoxine/pyridoxamine 5'-phosphate oxidase.